The chain runs to 95 residues: MKITKVAVAGTLESSDVQVRVQPFDSLDIEINSSVAKQFGEQIEATVREVLAKLGITAAQVIVEDKGALDCVLQARVKAAAMRATDEMINWEAVL.

S14 bears the O-(phosphoribosyl dephospho-coenzyme A)serine mark.

The protein belongs to the CitD family. In terms of assembly, oligomer with a subunit composition of (alpha,beta,gamma)6.

The protein localises to the cytoplasm. Covalent carrier of the coenzyme of citrate lyase. The chain is Citrate lyase acyl carrier protein from Haemophilus influenzae (strain PittGG).